The primary structure comprises 402 residues: LIM/homeobox protein Lhx5 (402 aa).

2 LIM zinc-binding domains span residues 3 to 61 (VHCA…RRFG) and 62 to 125 (TKCA…SSSL). Over residues 124-135 (SLKEGSLNSVSS) the composition is skewed to low complexity. 2 disordered regions span residues 124 to 186 (SLKE…PRTT) and 298 to 402 (HGPP…AAVW). Residues 151-167 (DDPKETDNSTSSDKETA) are compositionally biased toward basic and acidic residues. Positions 180–239 (RRGPRTTIKAKQLETLKAAFAATPKPTRHIREQLAQETGLNMRVIQVWFQNRRSKERRMK) form a DNA-binding region, homeobox. Composition is skewed to low complexity over residues 300-311 (PPSQAQSPADSS) and 322-336 (PLGA…PHAA).

As to expression, expressed in fetal brain and in various regions of the adult central nervous system including the spinal cord, the thalamus, and the cerebellum.

It is found in the nucleus. Functionally, plays an essential role in the regulation of neuronal differentiation and migration during development of the central nervous system. This Homo sapiens (Human) protein is LIM/homeobox protein Lhx5 (LHX5).